A 168-amino-acid chain; its full sequence is Translationally-controlled tumor protein homolog (168 aa).

Residues 1-168 (MLLYKDVISG…FKDGLVSEKF (168 aa)) enclose the TCTP domain. The residue at position 78 (S78) is a Phosphoserine.

The protein belongs to the TCTP family.

It localises to the cytoplasm. Involved in calcium binding and microtubule stabilization. May be a guanine nucleotide-free chaperone (GFC). This Schizosaccharomyces pombe (strain 972 / ATCC 24843) (Fission yeast) protein is Translationally-controlled tumor protein homolog (p23fy).